The sequence spans 138 residues: UPF0047 protein MJ1081 (138 aa).

Belongs to the UPF0047 family.

This Methanocaldococcus jannaschii (strain ATCC 43067 / DSM 2661 / JAL-1 / JCM 10045 / NBRC 100440) (Methanococcus jannaschii) protein is UPF0047 protein MJ1081.